Here is a 218-residue protein sequence, read N- to C-terminus: DNA-directed RNA polymerase III subunit RPC7-like (218 aa).

Positions 133–218 (LPKRPPKTTE…SDDNMDEAIY (86 aa)) are disordered. Basic and acidic residues predominate over residues 139–160 (KTTEDKEETIQKLETLEKKEEE). 2 stretches are compositionally biased toward acidic residues: residues 161-193 (VTSE…EETD) and 201-218 (NGED…EAIY).

This sequence belongs to the eukaryotic RPC7 RNA polymerase subunit family. Component of the RNA polymerase III (Pol III) complex consisting of 17 subunits. Pol III exists as two alternative complexes defined by the mutually exclusive incorporation of subunit POLR3G/RPC7alpha or POLR3GL/RPC7beta. Found in a trimeric complex with POLR3C/RPC3 and POLR3F/RPC6. Directly interacts with POLR3C. Widely expressed. Expressed in CD4-positive T cells.

It localises to the nucleus. Its function is as follows. DNA-dependent RNA polymerase catalyzes the transcription of DNA into RNA using the four ribonucleoside triphosphates as substrates. Specific peripheric component of RNA polymerase III which synthesizes small RNAs, such as 5S rRNA and tRNAs. The polypeptide is DNA-directed RNA polymerase III subunit RPC7-like (Homo sapiens (Human)).